The following is a 375-amino-acid chain: Alcohol dehydrogenase 6 (375 aa).

Serine 23 is modified (phosphoserine). Cysteine 47, histidine 69, cysteine 99, cysteine 102, cysteine 105, cysteine 113, and cysteine 175 together coordinate Zn(2+). NAD(+)-binding positions include 200-205 (GLGGVG), aspartate 224, lysine 229, 293-295 (VGL), and arginine 370.

Belongs to the zinc-containing alcohol dehydrogenase family. Class-V subfamily. As to quaternary structure, dimer. Zn(2+) is required as a cofactor.

The protein localises to the cytoplasm. The catalysed reaction is a primary alcohol + NAD(+) = an aldehyde + NADH + H(+). It catalyses the reaction a secondary alcohol + NAD(+) = a ketone + NADH + H(+). In terms of biological role, alcohol dehydrogenase. Catalyzes the NAD-dependent oxidation of primary alcohols to the corresponding aldehydes. Oxidizes secondary alcohols to the corresponding ketones. The protein is Alcohol dehydrogenase 6 (ADH6) of Pongo abelii (Sumatran orangutan).